Consider the following 401-residue polypeptide: S-adenosylmethionine synthase (401 aa).

136–141 (GTGSSD) serves as a coordination point for ATP. Positions 278-305 (GDDGSVGRGNRSNGLITPSRPMSMEATS) are disordered.

This sequence belongs to the AdoMet synthase 2 family. The cofactor is Mg(2+).

It carries out the reaction L-methionine + ATP + H2O = S-adenosyl-L-methionine + phosphate + diphosphate. It participates in amino-acid biosynthesis; S-adenosyl-L-methionine biosynthesis; S-adenosyl-L-methionine from L-methionine: step 1/1. Functionally, catalyzes the formation of S-adenosylmethionine from methionine and ATP. The chain is S-adenosylmethionine synthase from Methanococcoides burtonii (strain DSM 6242 / NBRC 107633 / OCM 468 / ACE-M).